An 87-amino-acid polypeptide reads, in one-letter code: U3-theraphotoxin-Hhn1h (87 aa).

An N-terminal signal peptide occupies residues 1-24 (MVNMKASMFLTFAGLVLLFVVCYA). A propeptide spanning residues 25–52 (SESEEKEFPKEMLSSIFAVDNDSKQEER) is cleaved from the precursor. 3 disulfides stabilise this stretch: Cys54/Cys67, Cys61/Cys72, and Cys66/Cys79.

This sequence belongs to the neurotoxin 10 (Hwtx-1) family. 51 (Hntx-8) subfamily. Hntx-8 sub-subfamily. In terms of tissue distribution, expressed by the venom gland.

The protein resides in the secreted. In terms of biological role, ion channel inhibitor. The protein is U3-theraphotoxin-Hhn1h of Cyriopagopus hainanus (Chinese bird spider).